The chain runs to 478 residues: MNSAVEQELAELGIEAYLSQHQHKSMLRFLTCGSVDDGKSTLIGRLLHDSKQIYADQLEAVHADSQRVGTTGERPDLALLVDGLQAEREQGITIDVAYRYFSTQKRKFIISDTPGHEQYTRNMATGASTCDVAVILIDARKGVLDQTRRHSYIANLLGIRHFVVAVNKMDLVDYSQSRFEEIKEEYVTFSKKLNNPNLDISILPLSALEGDNVVNHSAALAWYKGAPLLEVLEDIDIDADRGNGEFRFPVQYVNRPNLDFRGFSGSVSSGEIKVGDDIIALPSGKKSKVARIVTFDGDLPSAQAGQAVTLTLEDEIDISRGDLLVKSTSNLTATDQFKAEIVWMTEKGLQPGRQYDIKIAGKKTVGQIDAIHHQVNINSLETFVTDELPLNGIGLCDVSLTEVVSLDRYQDCADTGGFIFIDRLTNVTVGAGMIQNLSELSDVAPINDNVSAFEVELNALVRKHFPHWGAQDISKLLS.

The 217-residue stretch at 24–240 (KSMLRFLTCG…VLEDIDIDAD (217 aa)) folds into the tr-type G domain. A G1 region spans residues 33 to 40 (GSVDDGKS). 33 to 40 (GSVDDGKS) lines the GTP pocket. A G2 region spans residues 91–95 (GITID). Residues 112–115 (DTPG) form a G3 region. Residues 112-116 (DTPGH) and 167-170 (NKMD) each bind GTP. Residues 167 to 170 (NKMD) are G4. The tract at residues 206-208 (SAL) is G5.

It belongs to the TRAFAC class translation factor GTPase superfamily. Classic translation factor GTPase family. CysN/NodQ subfamily. As to quaternary structure, heterodimer composed of CysD, the smaller subunit, and CysN.

The enzyme catalyses sulfate + ATP + H(+) = adenosine 5'-phosphosulfate + diphosphate. It participates in sulfur metabolism; hydrogen sulfide biosynthesis; sulfite from sulfate: step 1/3. Functionally, with CysD forms the ATP sulfurylase (ATPS) that catalyzes the adenylation of sulfate producing adenosine 5'-phosphosulfate (APS) and diphosphate, the first enzymatic step in sulfur assimilation pathway. APS synthesis involves the formation of a high-energy phosphoric-sulfuric acid anhydride bond driven by GTP hydrolysis by CysN coupled to ATP hydrolysis by CysD. In Aliivibrio salmonicida (strain LFI1238) (Vibrio salmonicida (strain LFI1238)), this protein is Sulfate adenylyltransferase subunit 1.